The chain runs to 427 residues: V-type proton ATPase subunit C 2 (427 aa).

Residues 292–319 (HKVKVTPLGNPDRPAAGQTDRERESEGE) form a disordered region.

Belongs to the V-ATPase C subunit family. In terms of assembly, V-ATPase is a heteromultimeric enzyme made up of two complexes: the ATP-hydrolytic V1 complex and the proton translocation V0 complex. The V1 complex consists of three catalytic AB heterodimers that form a heterohexamer, three peripheral stalks each consisting of EG heterodimers, one central rotor including subunits D and F, and the regulatory subunits C and H. The proton translocation complex V0 consists of the proton transport subunit a, a ring of proteolipid subunits c9c'', rotary subunit d, subunits e and f, and the accessory subunits ATP6AP1/Ac45 and ATP6AP2/PRR. As to expression, kidney and placenta.

Subunit of the V1 complex of vacuolar(H+)-ATPase (V-ATPase), a multisubunit enzyme composed of a peripheral complex (V1) that hydrolyzes ATP and a membrane integral complex (V0) that translocates protons. V-ATPase is responsible for acidifying and maintaining the pH of intracellular compartments and in some cell types, is targeted to the plasma membrane, where it is responsible for acidifying the extracellular environment. Subunit C is necessary for the assembly of the catalytic sector of the enzyme and is likely to have a specific function in its catalytic activity. The protein is V-type proton ATPase subunit C 2 (ATP6V1C2) of Homo sapiens (Human).